The primary structure comprises 124 residues: Small ribosomal subunit protein uS12 (124 aa).

D89 is subject to 3-methylthioaspartic acid.

The protein belongs to the universal ribosomal protein uS12 family. Part of the 30S ribosomal subunit. Contacts proteins S8 and S17. May interact with IF1 in the 30S initiation complex.

Functionally, with S4 and S5 plays an important role in translational accuracy. Interacts with and stabilizes bases of the 16S rRNA that are involved in tRNA selection in the A site and with the mRNA backbone. Located at the interface of the 30S and 50S subunits, it traverses the body of the 30S subunit contacting proteins on the other side and probably holding the rRNA structure together. The combined cluster of proteins S8, S12 and S17 appears to hold together the shoulder and platform of the 30S subunit. In Campylobacter hominis (strain ATCC BAA-381 / DSM 21671 / CCUG 45161 / LMG 19568 / NCTC 13146 / CH001A), this protein is Small ribosomal subunit protein uS12.